Here is a 261-residue protein sequence, read N- to C-terminus: Glucose 1-dehydrogenase 2 (261 aa).

Residue 11–35 (VVTGGSKGLGRAMAVRFGQEQSKVV) coordinates NADP(+). S145 contributes to the substrate binding site. Y158 serves as the catalytic Proton acceptor.

This sequence belongs to the short-chain dehydrogenases/reductases (SDR) family. Homotetramer.

The catalysed reaction is D-glucose + NAD(+) = D-glucono-1,5-lactone + NADH + H(+). The enzyme catalyses D-glucose + NADP(+) = D-glucono-1,5-lactone + NADPH + H(+). The protein is Glucose 1-dehydrogenase 2 (gdhII) of Priestia megaterium (Bacillus megaterium).